The following is a 314-amino-acid chain: Fibrinogen-like protein 1 (314 aa).

Residues 1-22 form the signal peptide; it reads MGKIYSFVLVAIALMMGREGWA. A coiled-coil region spans residues 28–62; it reads CLREQVRLRAQVHQLETRVKQQQTMIAQLLHEKEV. Residues 76-308 enclose the Fibrinogen C-terminal domain; the sequence is LGGKRQYADC…SVVMKIRPSD (233 aa). Intrachain disulfides connect C85-C114 and C250-C263.

As to quaternary structure, homodimer. Interacts (via the Fibrinogen C-terminal domain) with LAG3 (via Ig-like domains 1 and 2). As to expression, mainly expressed in liver. Also expressed in brown adipose tissue.

It localises to the secreted. In terms of biological role, immune suppressive molecule that inhibits antigen-specific T-cell activation by acting as a major ligand of LAG3. Responsible for LAG3 T-cell inhibitory function. Binds LAG3 independently from MHC class II (MHC-II). Secreted by, and promotes growth of, hepatocytes. The protein is Fibrinogen-like protein 1 (Fgl1) of Mus musculus (Mouse).